The following is a 297-amino-acid chain: Formylmethanofuran--tetrahydromethanopterin formyltransferase-like protein (297 aa).

Belongs to the FTR family.

In Methanothermobacter thermautotrophicus (strain ATCC 29096 / DSM 1053 / JCM 10044 / NBRC 100330 / Delta H) (Methanobacterium thermoautotrophicum), this protein is Formylmethanofuran--tetrahydromethanopterin formyltransferase-like protein (ehaS).